The sequence spans 147 residues: E3 ubiquitin-protein ligase RNF181 homolog (147 aa).

The RING-type; atypical zinc-finger motif lies at 70 to 111; that stretch reads CSVCKEPAEEGQKYRILPCKHEFHEECILLWLKKTNSCPLCR.

It belongs to the RNF181 family.

It catalyses the reaction S-ubiquitinyl-[E2 ubiquitin-conjugating enzyme]-L-cysteine + [acceptor protein]-L-lysine = [E2 ubiquitin-conjugating enzyme]-L-cysteine + N(6)-ubiquitinyl-[acceptor protein]-L-lysine.. Its pathway is protein modification; protein ubiquitination. Functionally, E3 ubiquitin-protein ligase which accepts ubiquitin from an E2 ubiquitin-conjugating enzyme in the form of a thioester and then directly transfers the ubiquitin to targeted substrates. This Drosophila melanogaster (Fruit fly) protein is E3 ubiquitin-protein ligase RNF181 homolog.